The following is a 521-amino-acid chain: UDP-N-acetylmuramate--L-alanine ligase (521 aa).

136–142 (GAHGKTT) lines the ATP pocket.

It belongs to the MurCDEF family.

Its subcellular location is the cytoplasm. The catalysed reaction is UDP-N-acetyl-alpha-D-muramate + L-alanine + ATP = UDP-N-acetyl-alpha-D-muramoyl-L-alanine + ADP + phosphate + H(+). It participates in cell wall biogenesis; peptidoglycan biosynthesis. Functionally, cell wall formation. The polypeptide is UDP-N-acetylmuramate--L-alanine ligase (Bifidobacterium adolescentis (strain ATCC 15703 / DSM 20083 / NCTC 11814 / E194a)).